We begin with the raw amino-acid sequence, 94 residues long: Integration host factor subunit beta (94 aa).

It belongs to the bacterial histone-like protein family. In terms of assembly, heterodimer of an alpha and a beta chain.

Functionally, this protein is one of the two subunits of integration host factor, a specific DNA-binding protein that functions in genetic recombination as well as in transcriptional and translational control. The polypeptide is Integration host factor subunit beta (Escherichia coli O127:H6 (strain E2348/69 / EPEC)).